The following is an 804-amino-acid chain: Enhancer of polycomb homolog 2 (804 aa).

4 disordered regions span residues Q372–S398, G484–H507, Q602–C623, and N642–S669. The span at Q602–S611 shows a compositional bias: low complexity. A compositionally biased stretch (polar residues) spans D654–S669.

This sequence belongs to the enhancer of polycomb family.

It localises to the nucleus. Functionally, may play a role in transcription or DNA repair. The protein is Enhancer of polycomb homolog 2 (epc2) of Xenopus tropicalis (Western clawed frog).